A 154-amino-acid polypeptide reads, in one-letter code: Transcriptional repressor NrdR (154 aa).

The segment at 3-34 is a zinc-finger region; it reads CPFCRHPDSRVVDSRETDEGQAIRRRRSCPEC. The ATP-cone domain occupies 46 to 136; the sequence is LAVVKRSGVT…VYRSFSSAED (91 aa).

This sequence belongs to the NrdR family. Zn(2+) serves as cofactor.

Negatively regulates transcription of bacterial ribonucleotide reductase nrd genes and operons by binding to NrdR-boxes. The chain is Transcriptional repressor NrdR from Mycolicibacterium gilvum (strain PYR-GCK) (Mycobacterium gilvum (strain PYR-GCK)).